Consider the following 191-residue polypeptide: Putative endogenous retrovirus group K member 11-1 Env polyprotein (191 aa).

Residues 1 to 191 (MPGAIDDHCP…DITLHPQGLV (191 aa)) are truncated surface protein.

The protein belongs to the beta type-B retroviral envelope protein family. HERV class-II K(HML-8) env subfamily. Cerebellum and testis.

The protein localises to the virion. Retroviral envelope proteins mediate receptor recognition and membrane fusion during early infection. Endogenous envelope proteins may have kept, lost or modified their original function during evolution. The protein is Putative endogenous retrovirus group K member 11-1 Env polyprotein (ERVK11-1) of Homo sapiens (Human).